Reading from the N-terminus, the 127-residue chain is Stationary phase protein 3 (127 aa).

2 helical membrane passes run 29–49 (LFLF…FYVI) and 63–83 (ANSI…CFFL). Residue N86 is glycosylated (N-linked (GlcNAc...) asparagine).

The protein resides in the membrane. Required for survival during stationary phase. This chain is Stationary phase protein 3 (SPG3), found in Saccharomyces cerevisiae (strain ATCC 204508 / S288c) (Baker's yeast).